The sequence spans 603 residues: Aspartate--tRNA(Asp/Asn) ligase (603 aa).

An aspartate region spans residues 205–208 (QLFK). An L-aspartate-binding site is contributed by Arg227. ATP contacts are provided by residues 227–229 (RDE) and Gln236. His463 contacts L-aspartate. ATP is bound at residue Glu497. Residue Arg504 participates in L-aspartate binding. 549-552 (GMDR) contributes to the ATP binding site.

This sequence belongs to the class-II aminoacyl-tRNA synthetase family. Type 1 subfamily. Homodimer.

The protein localises to the cytoplasm. It catalyses the reaction tRNA(Asx) + L-aspartate + ATP = L-aspartyl-tRNA(Asx) + AMP + diphosphate. Its function is as follows. Aspartyl-tRNA synthetase with relaxed tRNA specificity since it is able to aspartylate not only its cognate tRNA(Asp) but also tRNA(Asn). Reaction proceeds in two steps: L-aspartate is first activated by ATP to form Asp-AMP and then transferred to the acceptor end of tRNA(Asp/Asn). The sequence is that of Aspartate--tRNA(Asp/Asn) ligase from Anaeromyxobacter dehalogenans (strain 2CP-C).